The sequence spans 273 residues: 4-hydroxy-tetrahydrodipicolinate reductase (273 aa).

NAD(+) contacts are provided by residues 11-16 (GALGRM), 102-104 (GTT), and 126-129 (SPNF). The active-site Proton donor/acceptor is His159. (S)-2,3,4,5-tetrahydrodipicolinate is bound at residue His160. Lys163 serves as the catalytic Proton donor. Residue 169–170 (GT) coordinates (S)-2,3,4,5-tetrahydrodipicolinate.

It belongs to the DapB family. Homotetramer.

It localises to the cytoplasm. It carries out the reaction (S)-2,3,4,5-tetrahydrodipicolinate + NAD(+) + H2O = (2S,4S)-4-hydroxy-2,3,4,5-tetrahydrodipicolinate + NADH + H(+). It catalyses the reaction (S)-2,3,4,5-tetrahydrodipicolinate + NADP(+) + H2O = (2S,4S)-4-hydroxy-2,3,4,5-tetrahydrodipicolinate + NADPH + H(+). The protein operates within amino-acid biosynthesis; L-lysine biosynthesis via DAP pathway; (S)-tetrahydrodipicolinate from L-aspartate: step 4/4. Functionally, catalyzes the conversion of 4-hydroxy-tetrahydrodipicolinate (HTPA) to tetrahydrodipicolinate. This Buchnera aphidicola subsp. Cinara cedri (strain Cc) protein is 4-hydroxy-tetrahydrodipicolinate reductase.